The primary structure comprises 203 residues: bMERB domain-containing protein 1 (203 aa).

Residues 3–149 (LKQSLSVHLE…EQEEDKEMAD (147 aa)) form the bMERB domain. The tract at residues 160–186 (KVTKSSASSRAEKKAEPPPSKPTVAKT) is disordered.

In Rattus norvegicus (Rat), this protein is bMERB domain-containing protein 1 (Bmerb1).